The primary structure comprises 430 residues: MPYIVDVYAREVLDSRGNPTVEVEVYTETGAFGRALVPSGASTGEYEAVELRDGDKDRYLGKGVLTAVNNVNEIISPELLGFDVTEQNAIDQLLIELDGTENKGKLGANAILGVSMACARAAADFLQIPLYQYLGGFNSKTLPVPMMNIVNGGEHADNNVDIQEFMIMPVGAPNFREALRMGAQIFHSLKSVLSAKGMNTAVGDEGGFAPNLGSNEEALQTIVEAIEKAGFKPGEEVKLAMDAASSEFYNKEDGKYHLSGEGVVKTSAEMVDWYEEMVSKYPIISIEDGLDENDWEGHKLLTERLGKKVQLVGDDLFVTNTKKLAEGIKNGVGNSILIKVNQIGTLTETFDAIEMAKRAGYTAVISHRSGETEDSTIADIAVATNAGQIKTGAPSRTDRVAKYNQLLRIEDQLAETAQYHGINSFYNLNK.

(2R)-2-phosphoglycerate is bound at residue Gln163. Glu205 serves as the catalytic Proton donor. 3 residues coordinate Mg(2+): Asp242, Glu287, and Asp314. Positions 339, 368, 369, and 390 each coordinate (2R)-2-phosphoglycerate. Catalysis depends on Lys339, which acts as the Proton acceptor.

It belongs to the enolase family. Requires Mg(2+) as cofactor.

Its subcellular location is the cytoplasm. It is found in the secreted. The protein resides in the cell surface. It carries out the reaction (2R)-2-phosphoglycerate = phosphoenolpyruvate + H2O. It functions in the pathway carbohydrate degradation; glycolysis; pyruvate from D-glyceraldehyde 3-phosphate: step 4/5. Catalyzes the reversible conversion of 2-phosphoglycerate (2-PG) into phosphoenolpyruvate (PEP). It is essential for the degradation of carbohydrates via glycolysis. This is Enolase from Bacillus velezensis (strain DSM 23117 / BGSC 10A6 / LMG 26770 / FZB42) (Bacillus amyloliquefaciens subsp. plantarum).